We begin with the raw amino-acid sequence, 868 residues long: Dolichyl-phosphooligosaccharide-protein glycotransferase 3 (868 aa).

At M1–V16 the chain is on the cytoplasmic side. The chain crosses the membrane as a helical span at residues L17 to V36. Residues F37–S101 are Extracellular-facing. The DXD motif 1 motif lies at G45–D47. D47 is a Mn(2+) binding site. Residue H81 coordinates a glycophospholipid. A helical transmembrane segment spans residues G102–V131. The Cytoplasmic segment spans residues F132 to D133. The chain crosses the membrane as a helical span at residues K134–Q153. The Extracellular portion of the chain corresponds to R154 to H162. D161 provides a ligand contact to Mn(2+). The DXD motif 2 signature appears at D161–H163. H162 contacts a glycophospholipid. H163 contacts Mn(2+). Residues H163–W184 traverse the membrane as a helical segment. Over K185 to A199 the chain is Cytoplasmic. The helical transmembrane segment at Y200–V212 threads the bilayer. Residues L213–W215 are Extracellular-facing. The helical transmembrane segment at G216 to F238 threads the bilayer. Topologically, residues V239–A241 are cytoplasmic. Residues D242–L262 form a helical membrane-spanning segment. Over P263 to F279 the chain is Extracellular. Residues Q280 to V303 traverse the membrane as a helical segment. Residues G304–G312 lie on the Cytoplasmic side of the membrane. Residues R313–L330 form a helical membrane-spanning segment. Residues F331–T373 lie on the Extracellular side of the membrane. Residues T357–E360 carry the TIXE motif motif. The helical transmembrane segment at L374–A396 threads the bilayer. Residues Y397 to S404 are Cytoplasmic-facing. A helical transmembrane segment spans residues F405–G423. Residues Q424–F427 lie on the Extracellular side of the membrane. R426 is a binding site for a glycophospholipid. A helical membrane pass occupies residues A428–L452. The Cytoplasmic portion of the chain corresponds to Y453 to Y468. The chain crosses the membrane as a helical span at residues F469–S494. Topologically, residues Y495–L868 are extracellular. The interval W550 to D552 is interacts with target acceptor peptide in protein substrate. Positions W550–G554 match the WWDYG motif motif. The DKi motif motif lies at E613–M622.

Belongs to the STT3 family. It depends on Mg(2+) as a cofactor. Mn(2+) serves as cofactor. Requires Zn(2+) as cofactor.

The protein resides in the cell membrane. The catalysed reaction is an archaeal dolichyl phosphooligosaccharide + [protein]-L-asparagine = an archaeal dolichyl phosphate + a glycoprotein with the oligosaccharide chain attached by N-beta-D-glycosyl linkage to a protein L-asparagine.. The protein operates within protein modification; protein glycosylation. Oligosaccharyl transferase (OST) that catalyzes the initial transfer of a defined glycan (a glucose-linked heptasaccharide composed of 3 Glc, 2 Man, 2 Gal and a sulfate for A.fulgidus AglB-L) from the lipid carrier dolichol-monophosphate to an asparagine residue within an Asn-X-Ser/Thr consensus motif in nascent polypeptide chains, the first step in protein N-glycosylation. The polypeptide is Dolichyl-phosphooligosaccharide-protein glycotransferase 3 (aglB3) (Archaeoglobus fulgidus (strain ATCC 49558 / DSM 4304 / JCM 9628 / NBRC 100126 / VC-16)).